The sequence spans 103 residues: MYAVIKTGGKQYRVAAGENIKVEQIAADVGQEIVIDQVLAVGNGAELKVGTPLVSGASVKATVVAHGKRDKVHIFKMRRRKHYQKRQGHRQQFTELHIGAIAV.

This sequence belongs to the bacterial ribosomal protein bL21 family. As to quaternary structure, part of the 50S ribosomal subunit. Contacts protein L20.

In terms of biological role, this protein binds to 23S rRNA in the presence of protein L20. The polypeptide is Large ribosomal subunit protein bL21 (Verminephrobacter eiseniae (strain EF01-2)).